Reading from the N-terminus, the 362-residue chain is MSFDINWSQLVEDESINNSIKEFLASQFSSVSLPSYIDNLTVSDFSLGDKAPEIIIRDIGDTFEDFYEDEDGPRNAGAPTTTATSGMGESDSSDDEDTRDGLTGEVTLSETTESKTQFAPQPLHPIPTKLRRSHTTSAATPLSSHAHLNSLYAYNLTNVGLGTLNLNSATPSGRDTPTQILNQMRTGPNSPPISNTPISSSKKSKRGENDVQIIAEVKYKGNLHIEVTVDLFLNYPSQHFVTLPIKLHITGFEIHSLICIAYLQNAVYFSFLCDVSDDSQADYFNGAHMESGGNFVEYVSGTNNKERIDIIKKVKIESEIGEVETNVLRNVGKVEKFLVEKIRSIIREETAWPSWLCFDMSD.

One can recognise an SMP-LTD domain in the interval methionine 1–serine 361. Disordered regions lie at residues aspartate 65–proline 141 and threonine 170–glycine 207. Polar residues-rich tracts occupy residues valine 106–alanine 119 and threonine 170–glycine 187. Over residues proline 192–serine 201 the composition is skewed to low complexity.

The protein belongs to the MDM12 family. As to quaternary structure, component of the ER-mitochondria encounter structure (ERMES) or MDM complex, composed of MMM1, MDM10, MDM12 and MDM34. An MMM1 homodimer associates with one molecule of MDM12 on each side in a pairwise head-to-tail manner, and the SMP-LTD domains of MMM1 and MDM12 generate a continuous hydrophobic tunnel for phospholipid trafficking.

It localises to the mitochondrion outer membrane. Its subcellular location is the endoplasmic reticulum membrane. In terms of biological role, component of the ERMES/MDM complex, which serves as a molecular tether to connect the endoplasmic reticulum (ER) and mitochondria. Components of this complex are involved in the control of mitochondrial shape and protein biogenesis, and function in nonvesicular lipid trafficking between the ER and mitochondria. MDM12 is required for the interaction of the ER-resident membrane protein MMM1 and the outer mitochondrial membrane-resident beta-barrel protein MDM10. The MDM12-MMM1 subcomplex functions in the major beta-barrel assembly pathway that is responsible for biogenesis of all mitochondrial outer membrane beta-barrel proteins, and acts in a late step after the SAM complex. The MDM10-MDM12-MMM1 subcomplex further acts in the TOM40-specific pathway after the action of the MDM12-MMM1 complex. Essential for establishing and maintaining the structure of mitochondria and maintenance of mtDNA nucleoids. In Meyerozyma guilliermondii (strain ATCC 6260 / CBS 566 / DSM 6381 / JCM 1539 / NBRC 10279 / NRRL Y-324) (Yeast), this protein is Mitochondrial distribution and morphology protein 12.